The primary structure comprises 361 residues: Isopentenyl-diphosphate delta-isomerase (361 aa).

12-13 is a substrate binding site; that stretch reads RK. Residues Ser-70, 71 to 73, Ser-101, and Asn-130 contribute to the FMN site; that span reads SMT. 101 to 103 is a substrate binding site; that stretch reads SMR. Gln-165 provides a ligand contact to substrate. Glu-166 contacts Mg(2+). FMN-binding positions include Lys-197 and 310 to 311; that span reads AG.

The protein belongs to the IPP isomerase type 2 family. As to quaternary structure, homooctamer. Dimer of tetramers. FMN serves as cofactor. NADPH is required as a cofactor. Requires Mg(2+) as cofactor.

It localises to the cytoplasm. It catalyses the reaction isopentenyl diphosphate = dimethylallyl diphosphate. In terms of biological role, involved in the biosynthesis of isoprenoids. Catalyzes the 1,3-allylic rearrangement of the homoallylic substrate isopentenyl (IPP) to its allylic isomer, dimethylallyl diphosphate (DMAPP). This is Isopentenyl-diphosphate delta-isomerase from Chlorobium luteolum (strain DSM 273 / BCRC 81028 / 2530) (Pelodictyon luteolum).